Reading from the N-terminus, the 287-residue chain is Glutamate racemase (287 aa).

Residues 32–33 (DS) and 64–65 (YG) contribute to the substrate site. The Proton donor/acceptor role is filled by Cys-96. Residue 97–98 (NT) coordinates substrate. Residue Cys-208 is the Proton donor/acceptor of the active site. Position 209-210 (209-210 (TH)) interacts with substrate.

This sequence belongs to the aspartate/glutamate racemases family.

It carries out the reaction L-glutamate = D-glutamate. It functions in the pathway cell wall biogenesis; peptidoglycan biosynthesis. Provides the (R)-glutamate required for cell wall biosynthesis. This chain is Glutamate racemase, found in Photorhabdus laumondii subsp. laumondii (strain DSM 15139 / CIP 105565 / TT01) (Photorhabdus luminescens subsp. laumondii).